A 134-amino-acid polypeptide reads, in one-letter code: ATP synthase epsilon chain, chloroplastic (134 aa).

The protein belongs to the ATPase epsilon chain family. As to quaternary structure, F-type ATPases have 2 components, CF(1) - the catalytic core - and CF(0) - the membrane proton channel. CF(1) has five subunits: alpha(3), beta(3), gamma(1), delta(1), epsilon(1). CF(0) has three main subunits: a, b and c.

Its subcellular location is the plastid. The protein localises to the chloroplast thylakoid membrane. Functionally, produces ATP from ADP in the presence of a proton gradient across the membrane. The sequence is that of ATP synthase epsilon chain, chloroplastic from Spinacia oleracea (Spinach).